A 633-amino-acid polypeptide reads, in one-letter code: Biosynthetic arginine decarboxylase (633 aa).

K101 carries the post-translational modification N6-(pyridoxal phosphate)lysine. Residue 284–294 (VDVGGGLGVDY) coordinates substrate.

This sequence belongs to the Orn/Lys/Arg decarboxylase class-II family. SpeA subfamily. Mg(2+) serves as cofactor. It depends on pyridoxal 5'-phosphate as a cofactor.

The enzyme catalyses L-arginine + H(+) = agmatine + CO2. It participates in amine and polyamine biosynthesis; agmatine biosynthesis; agmatine from L-arginine: step 1/1. In terms of biological role, catalyzes the biosynthesis of agmatine from arginine. The chain is Biosynthetic arginine decarboxylase from Aeromonas hydrophila subsp. hydrophila (strain ATCC 7966 / DSM 30187 / BCRC 13018 / CCUG 14551 / JCM 1027 / KCTC 2358 / NCIMB 9240 / NCTC 8049).